The chain runs to 185 residues: Ribosome-recycling factor (185 aa).

It belongs to the RRF family.

Its subcellular location is the cytoplasm. Its function is as follows. Responsible for the release of ribosomes from messenger RNA at the termination of protein biosynthesis. May increase the efficiency of translation by recycling ribosomes from one round of translation to another. The polypeptide is Ribosome-recycling factor (Pseudomonas putida (strain W619)).